Here is a 345-residue protein sequence, read N- to C-terminus: Heat stress transcription factor A-2 (345 aa).

Residues 17 to 30 are compositionally biased toward low complexity; sequence GSVAASSSVGSSSS. The segment at 17–40 is disordered; that stretch reads GSVAASSSVGSSSSPRPMEGLNET. A DNA-binding region spans residues 42–136; it reads PPPFLTKTYE…LLKNIKRRRN (95 aa). Positions 150 to 216 are hydrophobic repeat HR-A/B; it reads SCVEVGQYGF…QMMTFLAKAL (67 aa). The short motif at 231-238 is the Nuclear localization signal element; that stretch reads EKKSLFGL. Residues 273 to 282 carry the AHA1 motif; that stretch reads EMLFAAAIDD. A Glycyl lysine isopeptide (Lys-Gly) (interchain with G-Cter in SUMO) cross-link involves residue Lys315. The AHA2 motif lies at 324-333; sequence LDWDSQDLHD. The Nuclear export signal signature appears at 334–341; the sequence is MVDQMGFL.

The protein belongs to the HSF family. Class A subfamily. As to quaternary structure, homotrimer. Interacts with SUMO1. Binds to HSBP. In terms of processing, exhibits temperature-dependent phosphorylation. Sumoylated at Lys-315. Sumoylation represses its function.

It is found in the cytoplasm. It localises to the nucleus. Transcriptional activator that specifically binds DNA sequence 5'-AGAAnnTTCT-3' known as heat shock promoter elements (HSE). Seems to be involved in other environmental stress responses. Activates ascorbate peroxidase 2 (APX2) in addition to several heat shock protein (HSPs). Binds to the promoter of SGIP1 and activates its expression in heat acclimated plants. Involved in the mechanisms necessary for quick response to heat and subsequent heritable transgenerational memory of heat acclimation (global warming) such as early flowering and attenuated immunity; this process includes epigenetic regulation as well as post-transcriptional gene silencing (PTGS). In response to heat, HSFA2 is activated and promotes the expression of REF6 which in turn derepresses HSFA2, thus establishing an inheritable feedback loop able to trigger SGIP1 and subsequent SGIP1-mediated SGS3 degradation; this prevents the biosynthesis of trans-acting siRNA (tasiRNA) and leads to the release of HTT5, which drives early flowering but attenuates immunity. This Arabidopsis thaliana (Mouse-ear cress) protein is Heat stress transcription factor A-2.